A 304-amino-acid chain; its full sequence is MTTLRIATRKSPLALWQSEHVADALRQHHPGLEVVLVPMSTRGDEVLDRSLAAIGGKGLFLKELELAMLRGEADCAVHSLKDVPMELDEPFVLPAILERGDPADALVSNLYASLQALPLGARVGTSSLRRQAQLRAARPDLELIDLRGNVNTRLAKLDNGGYDAIVLACAGLQRLGLEARISARLDAPEWLPAPAQGAVAVECRGDDARIHSLLAVLDAGRTRVCVEAERAMNRALHGSCHVPVAAFARWEGQDLFLQGMVGSASDGRLIHADAHGSADDTEALGRRVAQGLFDKGAAQLLAEL.

Cysteine 240 carries the post-translational modification S-(dipyrrolylmethanemethyl)cysteine.

The protein belongs to the HMBS family. As to quaternary structure, monomer. Requires dipyrromethane as cofactor.

It carries out the reaction 4 porphobilinogen + H2O = hydroxymethylbilane + 4 NH4(+). The protein operates within porphyrin-containing compound metabolism; protoporphyrin-IX biosynthesis; coproporphyrinogen-III from 5-aminolevulinate: step 2/4. In terms of biological role, tetrapolymerization of the monopyrrole PBG into the hydroxymethylbilane pre-uroporphyrinogen in several discrete steps. The chain is Porphobilinogen deaminase from Xanthomonas axonopodis pv. citri (strain 306).